The following is a 439-amino-acid chain: Trigger factor (439 aa).

The region spanning 170–255 (GDTVVIDFDG…IHELKKLETP (86 aa)) is the PPIase FKBP-type domain.

The protein belongs to the FKBP-type PPIase family. Tig subfamily.

It localises to the cytoplasm. It carries out the reaction [protein]-peptidylproline (omega=180) = [protein]-peptidylproline (omega=0). Its function is as follows. Involved in protein export. Acts as a chaperone by maintaining the newly synthesized protein in an open conformation. Functions as a peptidyl-prolyl cis-trans isomerase. The chain is Trigger factor from Oenococcus oeni (strain ATCC BAA-331 / PSU-1).